The sequence spans 118 residues: Probable dihydroneopterin aldolase (118 aa).

Residues glutamate 21, tyrosine 53, and 72-73 contribute to the substrate site; that span reads IE. Lysine 98 functions as the Proton donor/acceptor in the catalytic mechanism.

This sequence belongs to the DHNA family.

The catalysed reaction is 7,8-dihydroneopterin = 6-hydroxymethyl-7,8-dihydropterin + glycolaldehyde. The protein operates within cofactor biosynthesis; tetrahydrofolate biosynthesis; 2-amino-4-hydroxy-6-hydroxymethyl-7,8-dihydropteridine diphosphate from 7,8-dihydroneopterin triphosphate: step 3/4. In terms of biological role, catalyzes the conversion of 7,8-dihydroneopterin to 6-hydroxymethyl-7,8-dihydropterin. In Synechocystis sp. (strain ATCC 27184 / PCC 6803 / Kazusa), this protein is Probable dihydroneopterin aldolase (folB).